We begin with the raw amino-acid sequence, 348 residues long: ELAV-like protein 3 (348 aa).

RRM domains follow at residues 34–112 (TNLI…YARP), 120–200 (ANLY…FANN), and 265–343 (WCIF…FKTS).

This sequence belongs to the RRM elav family. In terms of tissue distribution, expression is neural-specific in both embryos and adults. Expressed from neurula stage onwards in primary motor-, inter- and sensory-neurons. Expressed in the closing neural tube and motor neurons of stage 18 embryos, and primarily in the ventricular zone and dorsal region of the tailbud and adult brain. Expressed from stage 26 onwards in the differentiating ganglion cell layer of the retina, extending to the inner nuclear layer at later stages.

Its function is as follows. RNA-binding protein that binds to AU-rich element (ARE) sequences of target mRNAs. May also bind poly-A tracts via RRM 3. May be involved in neuronal differentiation and maintenance. This Xenopus laevis (African clawed frog) protein is ELAV-like protein 3 (elavl3).